A 311-amino-acid polypeptide reads, in one-letter code: Methionyl-tRNA formyltransferase (311 aa).

112–115 provides a ligand contact to (6S)-5,6,7,8-tetrahydrofolate; that stretch reads SLLP.

Belongs to the Fmt family.

The enzyme catalyses L-methionyl-tRNA(fMet) + (6R)-10-formyltetrahydrofolate = N-formyl-L-methionyl-tRNA(fMet) + (6S)-5,6,7,8-tetrahydrofolate + H(+). In terms of biological role, attaches a formyl group to the free amino group of methionyl-tRNA(fMet). The formyl group appears to play a dual role in the initiator identity of N-formylmethionyl-tRNA by promoting its recognition by IF2 and preventing the misappropriation of this tRNA by the elongation apparatus. The sequence is that of Methionyl-tRNA formyltransferase from Agrobacterium fabrum (strain C58 / ATCC 33970) (Agrobacterium tumefaciens (strain C58)).